We begin with the raw amino-acid sequence, 116 residues long: Probable non-functional immunoglobulin kappa variable 3-7 (116 aa).

A signal peptide spans methionine 1–glutamate 21. Residues glutamate 21 to cysteine 43 are framework-1. Residues isoleucine 22 to proline 116 enclose the Ig-like domain. A disulfide bond links cysteine 43 and cysteine 109. A complementarity-determining-1 region spans residues arginine 44–threonine 55. A framework-2 region spans residues tryptophan 56–tyrosine 70. The tract at residues glycine 71–threonine 77 is complementarity-determining-2. A framework-3 region spans residues serine 78 to cysteine 109. The complementarity-determining-3 stretch occupies residues glutamine 110–proline 116.

Immunoglobulins are composed of two identical heavy chains and two identical light chains; disulfide-linked.

Its subcellular location is the secreted. It localises to the cell membrane. Its function is as follows. Probable non-functional open reading frame (ORF) of V region of the variable domain of immunoglobulin light chains. Non-functional ORF generally cannot participate in the synthesis of a productive immunoglobulin chain due to altered V-(D)-J or switch recombination and/or splicing site (at mRNA level) and/or conserved amino acid change (protein level). Immunoglobulins, also known as antibodies, are membrane-bound or secreted glycoproteins produced by B lymphocytes. In the recognition phase of humoral immunity, the membrane-bound immunoglobulins serve as receptors which, upon binding of a specific antigen, trigger the clonal expansion and differentiation of B lymphocytes into immunoglobulins-secreting plasma cells. Secreted immunoglobulins mediate the effector phase of humoral immunity, which results in the elimination of bound antigens. The antigen binding site is formed by the variable domain of one heavy chain, together with that of its associated light chain. Thus, each immunoglobulin has two antigen binding sites with remarkable affinity for a particular antigen. The variable domains are assembled by a process called V-(D)-J rearrangement and can then be subjected to somatic hypermutations which, after exposure to antigen and selection, allow affinity maturation for a particular antigen. The sequence is that of Probable non-functional immunoglobulin kappa variable 3-7 from Homo sapiens (Human).